A 697-amino-acid polypeptide reads, in one-letter code: Polyribonucleotide nucleotidyltransferase (697 aa).

Mg(2+)-binding residues include D484 and D490. In terms of domain architecture, KH spans 551-610; that stretch reads PRITTIWVKTDKIRDVIGSGGKNIRGITEATGVSIDIEDSGRINIASTSKEACDKAIKMI. The 69-residue stretch at 620–688 folds into the S1 motif domain; the sequence is GKLYMGTVKK…KQGKIKLSRK (69 aa).

It belongs to the polyribonucleotide nucleotidyltransferase family. Mg(2+) is required as a cofactor.

Its subcellular location is the cytoplasm. The enzyme catalyses RNA(n+1) + phosphate = RNA(n) + a ribonucleoside 5'-diphosphate. Its function is as follows. Involved in mRNA degradation. Catalyzes the phosphorolysis of single-stranded polyribonucleotides processively in the 3'- to 5'-direction. The polypeptide is Polyribonucleotide nucleotidyltransferase (Geobacter sulfurreducens (strain ATCC 51573 / DSM 12127 / PCA)).